The sequence spans 215 residues: Adenylate kinase (215 aa).

Residue 10–15 (GAGKGT) coordinates ATP. The segment at 30 to 59 (STGDLLRAAVAAGTPLGKEAKAYMDRGELV) is NMP. Residues threonine 31, arginine 36, 57–59 (ELV), 85–88 (GFPR), and glutamine 92 contribute to the AMP site. Positions 126-163 (GRRTCKSCGQMYNVYYSPSKVEGKCDKCGGELFQRDDD) are LID. Residue arginine 127 coordinates ATP. Zn(2+) is bound by residues cysteine 130, cysteine 133, cysteine 150, and cysteine 153. Residues arginine 160 and arginine 171 each coordinate AMP. ATP is bound at residue glycine 199.

This sequence belongs to the adenylate kinase family. As to quaternary structure, monomer.

The protein localises to the cytoplasm. It carries out the reaction AMP + ATP = 2 ADP. The protein operates within purine metabolism; AMP biosynthesis via salvage pathway; AMP from ADP: step 1/1. Catalyzes the reversible transfer of the terminal phosphate group between ATP and AMP. Plays an important role in cellular energy homeostasis and in adenine nucleotide metabolism. In Thermodesulfovibrio yellowstonii (strain ATCC 51303 / DSM 11347 / YP87), this protein is Adenylate kinase.